The chain runs to 256 residues: Cell division protein ZapD (256 aa).

It belongs to the ZapD family. In terms of assembly, interacts with FtsZ.

The protein localises to the cytoplasm. Cell division factor that enhances FtsZ-ring assembly. Directly interacts with FtsZ and promotes bundling of FtsZ protofilaments, with a reduction in FtsZ GTPase activity. In Aromatoleum aromaticum (strain DSM 19018 / LMG 30748 / EbN1) (Azoarcus sp. (strain EbN1)), this protein is Cell division protein ZapD.